The following is a 352-amino-acid chain: Heat-inducible transcription repressor HrcA (352 aa).

It belongs to the HrcA family.

Negative regulator of class I heat shock genes (grpE-dnaK-dnaJ and groELS operons). Prevents heat-shock induction of these operons. This Chlorobium phaeobacteroides (strain BS1) protein is Heat-inducible transcription repressor HrcA.